The following is a 154-amino-acid chain: MTPLLQAEAKMNTSLYLTESIQQHEFNLTSPQSFYSSPSVPNSKNNSGIFSYNTANNSRVSSSDEFTTQQDGMNTIMYKNNISKTFEDDIFYCPRSLLTPEEQVVYQEIDKYYMEQALLTQLQISQTYSSTPKEEKIVKFNPYTSKSFSPASSE.

Serine 47 is subject to Phosphoserine.

To yeast YPL229w.

This is an uncharacterized protein from Saccharomyces cerevisiae (strain ATCC 204508 / S288c) (Baker's yeast).